The chain runs to 257 residues: Meiotically up-regulated gene 14 protein (257 aa).

The protein resides in the cytoplasm. It localises to the nucleus. Has a role in meiosis. The chain is Meiotically up-regulated gene 14 protein (mug14) from Schizosaccharomyces pombe (strain 972 / ATCC 24843) (Fission yeast).